A 388-amino-acid polypeptide reads, in one-letter code: AdoMet-dependent heme synthase (388 aa).

Low complexity predominate over residues 1–12 (MHNANHPHGNGH). Residues 1-29 (MHNANHPHGNGHPAEKKGMGAHSGAMNMP) form a disordered region. One can recognise a Radical SAM core domain in the interval 34 to 257 (DGSPACRLIA…TSMHLKATCA (224 aa)). 3 residues coordinate [4Fe-4S] cluster: Cys50, Cys54, and Cys57.

Belongs to the radical SAM superfamily. The cofactor is [4Fe-4S] cluster.

The catalysed reaction is Fe-coproporphyrin III + 2 S-adenosyl-L-methionine = heme b + 2 5'-deoxyadenosine + 2 L-methionine + 2 CO2. The protein operates within porphyrin-containing compound metabolism; protoheme biosynthesis. Its function is as follows. Involved in siroheme-dependent heme b biosynthesis. Catalyzes the conversion of Fe-coproporphyrin III into heme by the oxidative decarboxylation of two propionate side chains. The protein is AdoMet-dependent heme synthase of Oleidesulfovibrio alaskensis (strain ATCC BAA-1058 / DSM 17464 / G20) (Desulfovibrio alaskensis).